We begin with the raw amino-acid sequence, 711 residues long: Polyribonucleotide nucleotidyltransferase (711 aa).

Residues aspartate 486 and aspartate 492 each coordinate Mg(2+). The KH domain maps to 553-612 (PRIHTIKINPDKIKDVIGKGGSVIRALTEETGTTIEIEDDGTVKIAATDGEKAKHAIRRI). Residues 622-690 (GRVYNGKVTR…RQGRIRLSIK (69 aa)) enclose the S1 motif domain. The tract at residues 690-711 (KEATEQSQPAAALEAPAAEQGE) is disordered. A compositionally biased stretch (low complexity) spans 698-711 (PAAALEAPAAEQGE).

This sequence belongs to the polyribonucleotide nucleotidyltransferase family. As to quaternary structure, component of the RNA degradosome, which is a multiprotein complex involved in RNA processing and mRNA degradation. The cofactor is Mg(2+).

The protein localises to the cytoplasm. The enzyme catalyses RNA(n+1) + phosphate = RNA(n) + a ribonucleoside 5'-diphosphate. Its function is as follows. Involved in mRNA degradation. Catalyzes the phosphorolysis of single-stranded polyribonucleotides processively in the 3'- to 5'-direction. The polypeptide is Polyribonucleotide nucleotidyltransferase (Escherichia coli O127:H6 (strain E2348/69 / EPEC)).